The sequence spans 273 residues: 4-hydroxy-tetrahydrodipicolinate reductase (273 aa).

NAD(+) is bound by residues Gly12–Met17 and Glu38. NADP(+) is bound at residue Arg39. NAD(+) is bound by residues Gly102–Thr104 and Ala126–Phe129. The active-site Proton donor/acceptor is the His159. A (S)-2,3,4,5-tetrahydrodipicolinate-binding site is contributed by His160. Catalysis depends on Lys163, which acts as the Proton donor. Residue Gly169–Thr170 coordinates (S)-2,3,4,5-tetrahydrodipicolinate.

The protein belongs to the DapB family. Homotetramer.

The protein resides in the cytoplasm. It catalyses the reaction (S)-2,3,4,5-tetrahydrodipicolinate + NAD(+) + H2O = (2S,4S)-4-hydroxy-2,3,4,5-tetrahydrodipicolinate + NADH + H(+). The catalysed reaction is (S)-2,3,4,5-tetrahydrodipicolinate + NADP(+) + H2O = (2S,4S)-4-hydroxy-2,3,4,5-tetrahydrodipicolinate + NADPH + H(+). It participates in amino-acid biosynthesis; L-lysine biosynthesis via DAP pathway; (S)-tetrahydrodipicolinate from L-aspartate: step 4/4. Functionally, catalyzes the conversion of 4-hydroxy-tetrahydrodipicolinate (HTPA) to tetrahydrodipicolinate. The chain is 4-hydroxy-tetrahydrodipicolinate reductase from Shigella flexneri.